Here is a 508-residue protein sequence, read N- to C-terminus: Photosystem II CP47 reaction center protein (508 aa).

A run of 6 helical transmembrane segments spans residues 21-36 (SVHI…WAGS), 101-115 (IVFS…IWHW), 140-156 (GIHL…FGAF), 203-218 (IAAG…FHLS), 237-252 (VLSS…AFVV), and 457-472 (SFAL…HGAR).

Belongs to the PsbB/PsbC family. PsbB subfamily. PSII is composed of 1 copy each of membrane proteins PsbA, PsbB, PsbC, PsbD, PsbE, PsbF, PsbH, PsbI, PsbJ, PsbK, PsbL, PsbM, PsbT, PsbX, PsbY, PsbZ, Psb30/Ycf12, at least 3 peripheral proteins of the oxygen-evolving complex and a large number of cofactors. It forms dimeric complexes. The cofactor is Binds multiple chlorophylls. PSII binds additional chlorophylls, carotenoids and specific lipids..

It localises to the plastid. The protein resides in the chloroplast thylakoid membrane. Its function is as follows. One of the components of the core complex of photosystem II (PSII). It binds chlorophyll and helps catalyze the primary light-induced photochemical processes of PSII. PSII is a light-driven water:plastoquinone oxidoreductase, using light energy to abstract electrons from H(2)O, generating O(2) and a proton gradient subsequently used for ATP formation. The polypeptide is Photosystem II CP47 reaction center protein (Morus indica (Mulberry)).